The chain runs to 859 residues: Leucine--tRNA ligase (859 aa).

Residues 42 to 52 (PYPSGRLHMGH) carry the 'HIGH' region motif. The 'KMSKS' region motif lies at 618–622 (KMSKS). Lys621 lines the ATP pocket.

This sequence belongs to the class-I aminoacyl-tRNA synthetase family.

It localises to the cytoplasm. It carries out the reaction tRNA(Leu) + L-leucine + ATP = L-leucyl-tRNA(Leu) + AMP + diphosphate. The protein is Leucine--tRNA ligase of Shewanella baltica (strain OS223).